The chain runs to 422 residues: Replication factor C large subunit (422 aa).

Residue glycine 63 to threonine 70 coordinates ATP.

It belongs to the activator 1 small subunits family. RfcL subfamily. In terms of assembly, heteromultimer composed of small subunits (RfcS) and large subunits (RfcL).

Its function is as follows. Part of the RFC clamp loader complex which loads the PCNA sliding clamp onto DNA. The sequence is that of Replication factor C large subunit from Pyrobaculum neutrophilum (strain DSM 2338 / JCM 9278 / NBRC 100436 / V24Sta) (Thermoproteus neutrophilus).